A 327-amino-acid chain; its full sequence is Phenylalanine--tRNA ligase alpha subunit (327 aa).

Mg(2+) is bound at residue glutamate 252.

The protein belongs to the class-II aminoacyl-tRNA synthetase family. Phe-tRNA synthetase alpha subunit type 1 subfamily. In terms of assembly, tetramer of two alpha and two beta subunits. Mg(2+) serves as cofactor.

Its subcellular location is the cytoplasm. It carries out the reaction tRNA(Phe) + L-phenylalanine + ATP = L-phenylalanyl-tRNA(Phe) + AMP + diphosphate + H(+). The polypeptide is Phenylalanine--tRNA ligase alpha subunit (Klebsiella pneumoniae subsp. pneumoniae (strain ATCC 700721 / MGH 78578)).